A 119-amino-acid polypeptide reads, in one-letter code: Small ribosomal subunit protein uS13 (119 aa).

Positions 93 to 119 (RRGLPLRGQRTRSNARTRKGKRKPIRS) are disordered.

It belongs to the universal ribosomal protein uS13 family. Part of the 30S ribosomal subunit. Forms a loose heterodimer with protein S19. Forms two bridges to the 50S subunit in the 70S ribosome.

Its function is as follows. Located at the top of the head of the 30S subunit, it contacts several helices of the 16S rRNA. In the 70S ribosome it contacts the 23S rRNA (bridge B1a) and protein L5 of the 50S subunit (bridge B1b), connecting the 2 subunits; these bridges are implicated in subunit movement. Contacts the tRNAs in the A and P-sites. The polypeptide is Small ribosomal subunit protein uS13 (Coxiella burnetii (strain RSA 493 / Nine Mile phase I)).